The following is a 246-amino-acid chain: ATP synthase subunit b 1 (246 aa).

The chain crosses the membrane as a helical span at residues 5-27 (WFTFTAQVINFLVLVGLLRYFLY).

It belongs to the ATPase B chain family. F-type ATPases have 2 components, F(1) - the catalytic core - and F(0) - the membrane proton channel. F(1) has five subunits: alpha(3), beta(3), gamma(1), delta(1), epsilon(1). F(0) has three main subunits: a(1), b(2) and c(10-14). The alpha and beta chains form an alternating ring which encloses part of the gamma chain. F(1) is attached to F(0) by a central stalk formed by the gamma and epsilon chains, while a peripheral stalk is formed by the delta and b chains.

Its subcellular location is the cell inner membrane. In terms of biological role, f(1)F(0) ATP synthase produces ATP from ADP in the presence of a proton or sodium gradient. F-type ATPases consist of two structural domains, F(1) containing the extramembraneous catalytic core and F(0) containing the membrane proton channel, linked together by a central stalk and a peripheral stalk. During catalysis, ATP synthesis in the catalytic domain of F(1) is coupled via a rotary mechanism of the central stalk subunits to proton translocation. Its function is as follows. Component of the F(0) channel, it forms part of the peripheral stalk, linking F(1) to F(0). The chain is ATP synthase subunit b 1 from Rhodopirellula baltica (strain DSM 10527 / NCIMB 13988 / SH1).